We begin with the raw amino-acid sequence, 283 residues long: Glutamate racemase (283 aa).

Residues 28–29 (DS) and 60–61 (YG) contribute to the substrate site. Cys92 (proton donor/acceptor) is an active-site residue. 93-94 (NS) is a binding site for substrate. Cys204 acts as the Proton donor/acceptor in catalysis. Substrate is bound at residue 205-206 (TH).

This sequence belongs to the aspartate/glutamate racemases family.

The catalysed reaction is L-glutamate = D-glutamate. It participates in cell wall biogenesis; peptidoglycan biosynthesis. Its function is as follows. Provides the (R)-glutamate required for cell wall biosynthesis. This is Glutamate racemase from Erwinia tasmaniensis (strain DSM 17950 / CFBP 7177 / CIP 109463 / NCPPB 4357 / Et1/99).